The sequence spans 517 residues: uncharacterized protein (517 aa).

10 helical membrane passes run F35 to I55, I81 to N101, I102 to V122, I135 to L155, V164 to T184, L223 to G243, F268 to A288, F302 to L322, I328 to N348, and A352 to I372.

It is found in the cell membrane. This is an uncharacterized protein from Mycoplasma pneumoniae (strain ATCC 29342 / M129 / Subtype 1) (Mycoplasmoides pneumoniae).